A 120-amino-acid chain; its full sequence is NAD(P)H-quinone oxidoreductase subunit 3 (120 aa).

The next 3 membrane-spanning stretches (helical) occupy residues 6–26, 64–84, and 89–109; these read GYDA…LALV, MFAL…PWAV, and LGLL…VALA.

Belongs to the complex I subunit 3 family. As to quaternary structure, NDH-1 can be composed of about 15 different subunits; different subcomplexes with different compositions have been identified which probably have different functions.

It is found in the cellular thylakoid membrane. It catalyses the reaction a plastoquinone + NADH + (n+1) H(+)(in) = a plastoquinol + NAD(+) + n H(+)(out). The enzyme catalyses a plastoquinone + NADPH + (n+1) H(+)(in) = a plastoquinol + NADP(+) + n H(+)(out). In terms of biological role, NDH-1 shuttles electrons from an unknown electron donor, via FMN and iron-sulfur (Fe-S) centers, to quinones in the respiratory and/or the photosynthetic chain. The immediate electron acceptor for the enzyme in this species is believed to be plastoquinone. Couples the redox reaction to proton translocation, and thus conserves the redox energy in a proton gradient. Cyanobacterial NDH-1 also plays a role in inorganic carbon-concentration. This Synechococcus sp. (strain CC9605) protein is NAD(P)H-quinone oxidoreductase subunit 3.